The chain runs to 134 residues: Profilin-4 (134 aa).

Cys-13 and Cys-118 form a disulfide bridge. An Involved in PIP2 interaction motif is present at residues 84–100 (AVIRGKKGSGGITIKKT). The residue at position 114 (Thr-114) is a Phosphothreonine.

The protein belongs to the profilin family. In terms of assembly, occurs in many kinds of cells as a complex with monomeric actin in a 1:1 ratio. Post-translationally, phosphorylated by MAP kinases.

The protein resides in the cytoplasm. The protein localises to the cytoskeleton. In terms of biological role, binds to actin and affects the structure of the cytoskeleton. At high concentrations, profilin prevents the polymerization of actin, whereas it enhances it at low concentrations. The chain is Profilin-4 from Olea europaea (Common olive).